A 489-amino-acid chain; its full sequence is UDP-N-acetylmuramoyl-L-alanyl-D-glutamate--2,6-diaminopimelate ligase (489 aa).

Ser-32 lines the UDP-N-acetyl-alpha-D-muramoyl-L-alanyl-D-glutamate pocket. An ATP-binding site is contributed by Gly-113 to Thr-119. UDP-N-acetyl-alpha-D-muramoyl-L-alanyl-D-glutamate contacts are provided by residues Thr-154–Thr-155, Ser-181, Gln-187, and Arg-189. At Lys-221 the chain carries N6-carboxylysine. Meso-2,6-diaminopimelate is bound by residues Arg-381, Asp-405–Arg-408, Gly-456, and Glu-460. A Meso-diaminopimelate recognition motif motif is present at residues Asp-405–Arg-408.

It belongs to the MurCDEF family. MurE subfamily. It depends on Mg(2+) as a cofactor. Carboxylation is probably crucial for Mg(2+) binding and, consequently, for the gamma-phosphate positioning of ATP.

It is found in the cytoplasm. It catalyses the reaction UDP-N-acetyl-alpha-D-muramoyl-L-alanyl-D-glutamate + meso-2,6-diaminopimelate + ATP = UDP-N-acetyl-alpha-D-muramoyl-L-alanyl-gamma-D-glutamyl-meso-2,6-diaminopimelate + ADP + phosphate + H(+). It functions in the pathway cell wall biogenesis; peptidoglycan biosynthesis. Its function is as follows. Catalyzes the addition of meso-diaminopimelic acid to the nucleotide precursor UDP-N-acetylmuramoyl-L-alanyl-D-glutamate (UMAG) in the biosynthesis of bacterial cell-wall peptidoglycan. This Gloeobacter violaceus (strain ATCC 29082 / PCC 7421) protein is UDP-N-acetylmuramoyl-L-alanyl-D-glutamate--2,6-diaminopimelate ligase.